The sequence spans 379 residues: Cyclic dinucleotide synthase CdnE (379 aa).

Residues Q107, S109, D123, and K179 each coordinate UTP. D123 is a binding site for Mg(2+). A Mg(2+)-binding site is contributed by D193. Residues N229, K257, and S274 each coordinate UTP. Residues 328–330 carry the Pyrimidine specificity motif (R/Q)xW in donor pocket motif; it reads KIF.

Belongs to the CD-NTase family. E02 subfamily. It depends on Mg(2+) as a cofactor.

The catalysed reaction is 2 UTP = c-di-UMP + 2 diphosphate. It carries out the reaction UTP + ATP = 3',3'-cUAMP + 2 diphosphate. The enzyme catalyses UTP + CTP = cyclic CMP-UMP + 2 diphosphate. Its function is as follows. Cyclic nucleotide synthase (second messenger synthase) of a CBASS antivirus system. CBASS (cyclic oligonucleotide-based antiphage signaling system) provides immunity against bacteriophage. The CD-NTase protein synthesizes cyclic nucleotides in response to infection; these serve as specific second messenger signals. The signals activate a diverse range of effectors, leading to bacterial cell death and thus abortive phage infection. The effector protein for this system is membrane protein Cap15. A type I-B(UU) CBASS system. Functionally, cyclic dinucleotide synthase that preferentially catalyzes the synthesis of 3',3'-cyclic UMP-UMP (c-di-UMP) and 3',3'-cyclic UMP-AMP, with minor amounts of 3',3'-cyclic UMP-CMP, which are second messengers for cell signal transduction. In terms of biological role, protects E.coli against phage infection. When the CBASS operon (cap15-cdnE) is introduced in E.coli MG1655 it protects against phages T2, T4, T5, T6, SECPhi4, SECPhi6, SECPhi17, SECPhi18 and SECPhi27, but not against phage T7. The protein is Cyclic dinucleotide synthase CdnE of Yersinia aleksiciae.